The following is a 314-amino-acid chain: tRNA pseudouridine synthase B (314 aa).

Substrate is bound at residue H43. The active-site Nucleophile is D48. Substrate-binding residues include Y76, Y179, and L200.

It belongs to the pseudouridine synthase TruB family. Type 1 subfamily.

The catalysed reaction is uridine(55) in tRNA = pseudouridine(55) in tRNA. Responsible for synthesis of pseudouridine from uracil-55 in the psi GC loop of transfer RNAs. The polypeptide is tRNA pseudouridine synthase B (Salmonella paratyphi B (strain ATCC BAA-1250 / SPB7)).